Reading from the N-terminus, the 382-residue chain is ATP phosphoribosyltransferase regulatory subunit (382 aa).

The protein belongs to the class-II aminoacyl-tRNA synthetase family. HisZ subfamily. As to quaternary structure, heteromultimer composed of HisG and HisZ subunits.

It is found in the cytoplasm. Its pathway is amino-acid biosynthesis; L-histidine biosynthesis; L-histidine from 5-phospho-alpha-D-ribose 1-diphosphate: step 1/9. Required for the first step of histidine biosynthesis. May allow the feedback regulation of ATP phosphoribosyltransferase activity by histidine. The sequence is that of ATP phosphoribosyltransferase regulatory subunit from Burkholderia cenocepacia (strain ATCC BAA-245 / DSM 16553 / LMG 16656 / NCTC 13227 / J2315 / CF5610) (Burkholderia cepacia (strain J2315)).